An 808-amino-acid chain; its full sequence is uncharacterized protein (808 aa).

In terms of domain architecture, EF-hand 1 spans 6–41 (SRSEKVKRIFQQFDGNHDGGLNREEMAALVVAVNPR). TPR repeat units lie at residues 234-267 (FDGHMAIGRVLYEHQLFKEALVSFKRACELQPTD), 269-301 (RPHFKAGNCLYVLGKCKESKDEFLLALEAAESG), 310-343 (PQIYVNLGIALEGEGMVLSACEYYREAAILCPTH), 344-377 (FRALKLLGSALFGVGEYRAAVKALEEAIYLKPDY), 378-411 (ADAHCDLASSLHSMGEDERAIEVFQRAIDLKPGH), 412-445 (VDALYNLGGLYMDLGRFQRASEMYTRVLTVWPNH), and 447-479 (RAQLNKAVSLLGAGETEEAKRALKEALKLTNRV). The 36-residue stretch at 600-635 (AIKAINEKILALLDDSGSGRVDMGMFYAVIAPLCGG) folds into the EF-hand 2 domain. A coiled-coil region spans residues 773–794 (FKQEEYKFREYESEAEAMKAKC).

This is an uncharacterized protein from Arabidopsis thaliana (Mouse-ear cress).